Consider the following 314-residue polypeptide: Ribosomal RNA small subunit methyltransferase H (314 aa).

Residues 37-39 (GGH), aspartate 56, phenylalanine 86, aspartate 108, and histidine 115 contribute to the S-adenosyl-L-methionine site.

It belongs to the methyltransferase superfamily. RsmH family.

Its subcellular location is the cytoplasm. The catalysed reaction is cytidine(1402) in 16S rRNA + S-adenosyl-L-methionine = N(4)-methylcytidine(1402) in 16S rRNA + S-adenosyl-L-homocysteine + H(+). In terms of biological role, specifically methylates the N4 position of cytidine in position 1402 (C1402) of 16S rRNA. This is Ribosomal RNA small subunit methyltransferase H from Leptospira biflexa serovar Patoc (strain Patoc 1 / ATCC 23582 / Paris).